We begin with the raw amino-acid sequence, 157 residues long: Phosphopantetheine adenylyltransferase (157 aa).

A substrate-binding site is contributed by T10. ATP is bound by residues 10–11 and H18; that span reads TF. Substrate contacts are provided by K42, L74, and R88. ATP is bound by residues 89–91, E99, and 124–130; these read GLR and NAFISSS.

Belongs to the bacterial CoaD family. In terms of assembly, homohexamer. Mg(2+) is required as a cofactor.

It localises to the cytoplasm. It carries out the reaction (R)-4'-phosphopantetheine + ATP + H(+) = 3'-dephospho-CoA + diphosphate. Its pathway is cofactor biosynthesis; coenzyme A biosynthesis; CoA from (R)-pantothenate: step 4/5. Its function is as follows. Reversibly transfers an adenylyl group from ATP to 4'-phosphopantetheine, yielding dephospho-CoA (dPCoA) and pyrophosphate. This chain is Phosphopantetheine adenylyltransferase, found in Helicobacter pylori (strain Shi470).